Here is a 424-residue protein sequence, read N- to C-terminus: MISRLFASNQNVKLVRTFKSTSISMAAEKKKFERTKPHVNVGTIGHVDHGKTTLTAAITKTLSDRGLANFKSYAQIDKSPEEKARGITITASHIEYESATRHYAHIDCPGHQHYIKNMITGAAQMDGAILVVSAPDGPQEQTREHIILSREVGIPALVVFLNKMDNADPDLVEIVEMEVRELLSQYGFNGDETPFVKGAAAVALAETNETATQYGRKAIDELVEVLDTKIPLPHRAVDKPFLMPVEEVFSISGRGTVATGRIEQGTLKVGEEVAIVGIKPVPKVAVTGIEMFGKLLDFAQAGENVGCLLRGLKREEVLRGEVISKPGTIKASTKFKAKTYVLTEAEGGRKKGFATGYRPQFFIRTANVTGMIELPPTHAVILPGDSLEFTVELISPTPLSINGRFAIREGQLTVGAGVISEILN.

The 199-residue stretch at Lys36 to His234 folds into the tr-type G domain. Residues Gly45–Thr52 form a G1 region. Gly45–Thr52 serves as a coordination point for GTP. The tract at residues Gly86–Thr90 is G2. The segment at Asp107 to Gly110 is G3. GTP-binding positions include Asp107 to His111 and Asn162 to Asp165. Positions Asn162 to Asp165 are G4. A G5 region spans residues Ala199–Ala201.

Belongs to the TRAFAC class translation factor GTPase superfamily. Classic translation factor GTPase family. EF-Tu/EF-1A subfamily.

It is found in the mitochondrion. This protein promotes the GTP-dependent binding of aminoacyl-tRNA to the A-site of ribosomes during protein biosynthesis. The sequence is that of Elongation factor Tu, mitochondrial (tufm) from Dictyostelium discoideum (Social amoeba).